The sequence spans 161 residues: Nucleotide-binding protein Dtpsy_2240 (161 aa).

It belongs to the YajQ family.

Functionally, nucleotide-binding protein. This is Nucleotide-binding protein Dtpsy_2240 from Acidovorax ebreus (strain TPSY) (Diaphorobacter sp. (strain TPSY)).